The primary structure comprises 438 residues: Coenzyme A disulfide reductase (438 aa).

Position 8 to 33 (8 to 33 (GAVAGGATCASQIRRLDKESDIIIFE)) interacts with FAD. The substrate site is built by Thr15, Gln19, Arg22, Ser39, and Asn42. The active-site Nucleophile is Cys43. Cys43 acts as the Redox-active in catalysis. Residue Lys71 participates in substrate binding. 151–166 (VLVVGAGYVSLEVLEN) is a binding site for NADP(+). 267 to 277 (TNVPNIYAIGD) is a binding site for FAD. His299 lines the substrate pocket. FAD is bound at residue Tyr419. Lys427 provides a ligand contact to substrate.

The protein belongs to the class-III pyridine nucleotide-disulfide oxidoreductase family. As to quaternary structure, homodimer. The cofactor is FAD.

The catalysed reaction is NADP(+) + 2 CoA = CoA-disulfide + NADPH + H(+). Functionally, catalyzes specifically the NADPH-dependent reduction of coenzyme A disulfide. Is also active with other disulfide substrates containing at least one 4'-phosphopantethienyl moiety such as 4,4'-diphosphopantethine, but is not able to reduce oxidized glutathione, cystine, pantethine, or H(2)O(2). The protein is Coenzyme A disulfide reductase (cdr) of Staphylococcus aureus (strain NCTC 8325 / PS 47).